The following is a 506-amino-acid chain: Anaerobic nitric oxide reductase transcription regulator NorR (506 aa).

Position 57 is a 4-aspartylphosphate (D57). In terms of domain architecture, Sigma-54 factor interaction spans 187–416 (MIGLSPAMTQ…LEHAIHRAVV (230 aa)). Residues 215 to 222 (GETGTGKE) and 278 to 287 (ADNGTLFLDE) each bind ATP. The segment at residues 481–500 (WAASARALETDVANLHRLAK) is a DNA-binding region (H-T-H motif).

It functions in the pathway nitrogen metabolism; nitric oxide reduction. Required for the expression of anaerobic nitric oxide (NO) reductase, acts as a transcriptional activator for at least the norVW operon. Activation also requires sigma-54. The chain is Anaerobic nitric oxide reductase transcription regulator NorR from Salmonella newport (strain SL254).